The chain runs to 88 residues: Small ribosomal subunit protein bS20 (88 aa).

Residues 1–20 (MANHKSAEKRARQTIKRTER) form a disordered region.

It belongs to the bacterial ribosomal protein bS20 family.

Its function is as follows. Binds directly to 16S ribosomal RNA. The sequence is that of Small ribosomal subunit protein bS20 from Campylobacter fetus subsp. fetus (strain 82-40).